A 598-amino-acid polypeptide reads, in one-letter code: NADH-quinone oxidoreductase subunit C/D (598 aa).

An NADH dehydrogenase I subunit C region spans residues 1 to 189; it reads MTDLTTSDST…DPFVLTKQKE (189 aa). Positions 213–598 are NADH dehydrogenase I subunit D; the sequence is DFMFLNLGPN…IDFVMSDVDR (386 aa).

The protein in the N-terminal section; belongs to the complex I 30 kDa subunit family. In the C-terminal section; belongs to the complex I 49 kDa subunit family. In terms of assembly, NDH-1 is composed of 13 different subunits. Subunits NuoB, CD, E, F, and G constitute the peripheral sector of the complex.

Its subcellular location is the cell inner membrane. The catalysed reaction is a quinone + NADH + 5 H(+)(in) = a quinol + NAD(+) + 4 H(+)(out). Its function is as follows. NDH-1 shuttles electrons from NADH, via FMN and iron-sulfur (Fe-S) centers, to quinones in the respiratory chain. The immediate electron acceptor for the enzyme in this species is believed to be ubiquinone. Couples the redox reaction to proton translocation (for every two electrons transferred, four hydrogen ions are translocated across the cytoplasmic membrane), and thus conserves the redox energy in a proton gradient. The polypeptide is NADH-quinone oxidoreductase subunit C/D (Yersinia enterocolitica serotype O:8 / biotype 1B (strain NCTC 13174 / 8081)).